The primary structure comprises 93 residues: Stromal cell-derived factor 1 (93 aa).

The signal sequence occupies residues 1–21 (MDAKVVAVLALVLAALCISDG). Residues 22 to 23 (KP) carry the Receptor activation motif motif. The tract at residues 29-33 (RCPCR) is receptor and heparin binding. 2 disulfides stabilise this stretch: Cys-30–Cys-55 and Cys-32–Cys-71. Receptor binding stretches follow at residues 39–41 (IAR), 48–50 (KIL), and 60–70 (VARLKNNNRQV). Heparin is bound by residues 41 to 51 (RANVKHLKILN), Arg-62, Gln-69, and Lys-85.

Belongs to the intercrine alpha (chemokine CxC) family. Monomer or homodimer; in equilibrium. Dimer formation is induced by non acidic pH and the presence of multivalent anions, and by binding to CXCR4 or heparin. Monomeric form is required for full chemotactic activity and resistance to ischemia/reperfusion injury, whereas the dimeric form acts as a partial agonist of CXCR4, stimulating Ca2+ mobilization but with no chemotactic activity and instead acts as a selective antagonist that blocks chemotaxis induced by the monomeric form. Interacts with the N-terminus of ACKR3. Interacts with integrin subunit ITGB3 (via the allosteric site (site 2)). Interacts with TNFAIP6 (via Link domain). As to expression, highest expression levels detected in kidney, liver, spleen and muscle. Isoform Alpha is expressed ubiquitously but at varying levels, while isoform Beta displays tissue-specific expression, with expression detected in kidney, liver, heart, spleen and muscle but not in lung, colon, brain, skin and stomach.

It localises to the secreted. In terms of biological role, chemoattractant active on T-lymphocytes and monocytes but not neutrophils. Activates the C-X-C chemokine receptor CXCR4 to induce a rapid and transient rise in the level of intracellular calcium ions and chemotaxis. Also binds to atypical chemokine receptor ACKR3, which activates the beta-arrestin pathway and acts as a scavenger receptor for SDF-1. Binds to the allosteric site (site 2) of integrins and activates integrins ITGAV:ITGB3, ITGA4:ITGB1 and ITGA5:ITGB1 in a CXCR4-independent manner. Acts as a positive regulator of monocyte migration and a negative regulator of monocyte adhesion via the LYN kinase. Stimulates migration of monocytes and T-lymphocytes through its receptors, CXCR4 and ACKR3, and decreases monocyte adherence to surfaces coated with ICAM-1, a ligand for beta-2 integrins. SDF1A/CXCR4 signaling axis inhibits beta-2 integrin LFA-1 mediated adhesion of monocytes to ICAM-1 through LYN kinase. Plays a protective role after myocardial infarction. Induces down-regulation and internalization of ACKR3 expressed in various cells. Has several critical functions during embryonic development; required for B-cell lymphopoiesis, myelopoiesis in bone marrow and heart ventricular septum formation. Stimulates the proliferation of bone marrow-derived B-cell progenitors in the presence of IL7 as well as growth of stromal cell-dependent pre-B-cells. The sequence is that of Stromal cell-derived factor 1 (Cxcl12) from Mus musculus (Mouse).